Here is a 26-residue protein sequence, read N- to C-terminus: VDSEDLIEAFKIYVEDDNEHLQGSVD.

Glycosylated. As to expression, detected in dry seeds and cotyledons.

It catalyses the reaction Hydrolysis of terminal non-reducing N-acetyl-D-hexosamine residues in N-acetyl-beta-D-hexosaminides.. With respect to regulation, inhibited by AgNO(3) at a concentration of 0.1 mM. Strongly inhibited by CdCl(2), ZnCl(2) and FeCl(3) and moderately by CoCl(2), CuSO(4) and NiCl(2) at 10 mM concentration. CaCl(2), MgCl(2), MnSO(4) and KI also have a slight inhibitory effect of 20%-25% at 10 mM concentration. Activated to a small extent by MgCl(2) at 0.1 mM concentration but inhibited with increasing concentration. Not affected by carbohydrates such as fucose, galactose and glucose but displays a slight decrease in activity up to 25% with lactose, alpha-mannose and N-acetyl-galactosamine (GalNAc). Functionally, has hexosaminidase activity. Active with both p-nitrophenyl-beta-D-N-acetylglucosamine (pNP-GlcNAc) and p-nitrophenyl-beta-D-N-acetylgalactosamine (pNP-GalNAc). Not active toward p-nitrophenyl-beta-D-N,N'-diacetylchitobiose (pNP-(GlcNAc)2) or p-nitrophenyl-beta-D-N,N',N''-triacetylchitobiose (pNP-(GlcNAc)3). Removes terminal GlcNAc and may be involved in storage protein degradation. This chain is Beta-hexosaminidase, found in Lupinus albus (White lupine).